The chain runs to 274 residues: Probable formate transporter (274 aa).

7 consecutive transmembrane segments (helical) span residues 31–51 (IVLS…AEVV), 62–82 (AGLV…LVVI), 118–138 (VFNL…TGIL), 176–196 (AFWR…LAIA), 200–220 (IIGK…IGFE), 226–246 (MFFI…FFMN), and 248–268 (LIPV…CLYW).

This sequence belongs to the FNT transporter (TC 1.A.16) family.

It localises to the cell membrane. Its function is as follows. May act as a formate transporter. The sequence is that of Probable formate transporter (fdhC) from Methanothermobacter thermautotrophicus (Methanobacterium thermoformicicum).